The primary structure comprises 345 residues: Probable deoxyhypusine synthase 2 (345 aa).

Lysine 292 serves as the catalytic Nucleophile.

The protein belongs to the deoxyhypusine synthase family. Requires NAD(+) as cofactor.

It catalyses the reaction [eIF5A protein]-L-lysine + spermidine = [eIF5A protein]-deoxyhypusine + propane-1,3-diamine. It functions in the pathway protein modification; eIF5A hypusination. Catalyzes the NAD-dependent oxidative cleavage of spermidine and the subsequent transfer of the butylamine moiety of spermidine to the epsilon-amino group of a specific lysine residue of the eIF-5A precursor protein to form the intermediate deoxyhypusine residue. The chain is Probable deoxyhypusine synthase 2 (dys2) from Methanosarcina mazei (strain ATCC BAA-159 / DSM 3647 / Goe1 / Go1 / JCM 11833 / OCM 88) (Methanosarcina frisia).